A 227-amino-acid chain; its full sequence is MRWAIVRFPGANCDEDARFALEKAGIRAEFVWHTERDLRGFDGVFLPGGFSYGDYLRAGALAAKSPVMEAVRRFAEEGRYVVGVCNGFQILTEAGLLPGALLANLNLHFTCKEVGVRVERNDLPFTRLYPRGQVLRLPIAHGEGRYYADPETLARLEGEGLVVFRYAPLKDEADYNPNGSLHDIAGIVSEKGNVLGMMPHPERAVDEVLGNTDGLPFFLGLVKEVAR.

One can recognise a Glutamine amidotransferase type-1 domain in the interval 2 to 227 (RWAIVRFPGA…FLGLVKEVAR (226 aa)). Residue Cys-85 is the Nucleophile of the active site. Residues His-200 and Glu-202 contribute to the active site.

Part of the FGAM synthase complex composed of 1 PurL, 1 PurQ and 2 PurS subunits.

It localises to the cytoplasm. The enzyme catalyses N(2)-formyl-N(1)-(5-phospho-beta-D-ribosyl)glycinamide + L-glutamine + ATP + H2O = 2-formamido-N(1)-(5-O-phospho-beta-D-ribosyl)acetamidine + L-glutamate + ADP + phosphate + H(+). It carries out the reaction L-glutamine + H2O = L-glutamate + NH4(+). It functions in the pathway purine metabolism; IMP biosynthesis via de novo pathway; 5-amino-1-(5-phospho-D-ribosyl)imidazole from N(2)-formyl-N(1)-(5-phospho-D-ribosyl)glycinamide: step 1/2. Its function is as follows. Part of the phosphoribosylformylglycinamidine synthase complex involved in the purines biosynthetic pathway. Catalyzes the ATP-dependent conversion of formylglycinamide ribonucleotide (FGAR) and glutamine to yield formylglycinamidine ribonucleotide (FGAM) and glutamate. The FGAM synthase complex is composed of three subunits. PurQ produces an ammonia molecule by converting glutamine to glutamate. PurL transfers the ammonia molecule to FGAR to form FGAM in an ATP-dependent manner. PurS interacts with PurQ and PurL and is thought to assist in the transfer of the ammonia molecule from PurQ to PurL. This Thermus thermophilus (strain ATCC 27634 / DSM 579 / HB8) protein is Phosphoribosylformylglycinamidine synthase subunit PurQ.